The following is a 157-amino-acid chain: 2-C-methyl-D-erythritol 2,4-cyclodiphosphate synthase (157 aa).

Asp-8 and His-10 together coordinate a divalent metal cation. Residues Asp-8 to His-10 and His-34 to Ser-35 each bind 4-CDP-2-C-methyl-D-erythritol 2-phosphate. A divalent metal cation is bound at residue His-42. 4-CDP-2-C-methyl-D-erythritol 2-phosphate contacts are provided by residues Asp-56–Gly-58, Phe-61–Asp-65, Ala-100–Ala-106, Thr-132–Glu-135, Phe-139, and Arg-142.

It belongs to the IspF family. As to quaternary structure, homotrimer. The cofactor is a divalent metal cation.

The enzyme catalyses 4-CDP-2-C-methyl-D-erythritol 2-phosphate = 2-C-methyl-D-erythritol 2,4-cyclic diphosphate + CMP. It participates in isoprenoid biosynthesis; isopentenyl diphosphate biosynthesis via DXP pathway; isopentenyl diphosphate from 1-deoxy-D-xylulose 5-phosphate: step 4/6. In terms of biological role, involved in the biosynthesis of isopentenyl diphosphate (IPP) and dimethylallyl diphosphate (DMAPP), two major building blocks of isoprenoid compounds. Catalyzes the conversion of 4-diphosphocytidyl-2-C-methyl-D-erythritol 2-phosphate (CDP-ME2P) to 2-C-methyl-D-erythritol 2,4-cyclodiphosphate (ME-CPP) with a corresponding release of cytidine 5-monophosphate (CMP). The protein is 2-C-methyl-D-erythritol 2,4-cyclodiphosphate synthase of Pseudomonas putida (strain GB-1).